Reading from the N-terminus, the 146-residue chain is uncharacterized protein (146 aa).

The chain crosses the membrane as a helical span at residues 7 to 27 (FVLSITIVLVILIIIAFIWYN).

It belongs to the asfivirus E146L family.

The protein localises to the host membrane. It localises to the virion. This is an uncharacterized protein from Ornithodoros (relapsing fever ticks).